Here is a 239-residue protein sequence, read N- to C-terminus: Calcium-activated potassium channel subunit beta-3 (239 aa).

Over 1-51 (MQPFSIPVQITLQGGRRRQGRTALPASGISNGDPLKVHPKLPSSAGEDRAT) the chain is Cytoplasmic. Residues 15–38 (GRRRQGRTALPASGISNGDPLKVH) form a disordered region. Residues 52 to 72 (LLGIAMMASSVLMFFLLGTTV) form a helical membrane-spanning segment. Residues 73–197 (LKPFMLSSPR…GVVLRKSGHK (125 aa)) lie on the Extracellular side of the membrane. 3 N-linked (GlcNAc...) asparagine glycosylation sites follow: Asn-86, Asn-123, and Asn-174. Residues 198–218 (VVFHCLFWPLLTLLGGALIVG) traverse the membrane as a helical segment. At 219-239 (LVRLTQHLSFQCEKYRAVVRA) the chain is on the cytoplasmic side.

It belongs to the KCNMB (TC 8.A.14.1) family. KCNMB3 subfamily. As to quaternary structure, interacts with KCNMA1 tetramer. There are probably 4 molecules of KCMNB3 per KCNMA1 tetramer. In terms of processing, N-glycosylated. Post-translationally, the extracellular domain contains disulfide bond essential for the gating mechanism.

It localises to the membrane. Its function is as follows. Regulatory subunit of the calcium activated potassium KCNMA1 (maxiK) channel. Modulates the calcium sensitivity and gating kinetics of KCNMA1, thereby contributing to KCNMA1 channel diversity. Alters the functional properties of the current expressed by the KCNMA1 channel. May partially inactivate the current of KCNBMA. Two or more subunits of KCNMB3 are required to block the KCNMA1 tetramer. This Rattus norvegicus (Rat) protein is Calcium-activated potassium channel subunit beta-3.